Reading from the N-terminus, the 426-residue chain is 3-phosphoshikimate 1-carboxyvinyltransferase (426 aa).

3-phosphoshikimate-binding residues include lysine 22, serine 23, and arginine 27. Lysine 22 contributes to the phosphoenolpyruvate binding site. Residues glycine 96 and arginine 124 each contribute to the phosphoenolpyruvate site. 7 residues coordinate 3-phosphoshikimate: serine 170, serine 171, glutamine 172, serine 198, aspartate 314, asparagine 337, and lysine 341. Glutamine 172 contributes to the phosphoenolpyruvate binding site. The active-site Proton acceptor is the aspartate 314. Positions 345, 387, and 412 each coordinate phosphoenolpyruvate.

Belongs to the EPSP synthase family. Monomer.

Its subcellular location is the cytoplasm. The catalysed reaction is 3-phosphoshikimate + phosphoenolpyruvate = 5-O-(1-carboxyvinyl)-3-phosphoshikimate + phosphate. Its pathway is metabolic intermediate biosynthesis; chorismate biosynthesis; chorismate from D-erythrose 4-phosphate and phosphoenolpyruvate: step 6/7. Its function is as follows. Catalyzes the transfer of the enolpyruvyl moiety of phosphoenolpyruvate (PEP) to the 5-hydroxyl of shikimate-3-phosphate (S3P) to produce enolpyruvyl shikimate-3-phosphate and inorganic phosphate. The polypeptide is 3-phosphoshikimate 1-carboxyvinyltransferase (Photobacterium damsela subsp. piscicida (Pasteurella piscicida)).